A 797-amino-acid chain; its full sequence is RAS guanyl-releasing protein 1 (797 aa).

A compositionally biased stretch (basic and acidic residues) spans 1-12 (MGTLGKAREAPR). Residues 1–23 (MGTLGKAREAPRKPSHGCRAASK) form a disordered region. One can recognise an N-terminal Ras-GEF domain in the interval 53 to 176 (LGHLAKGASL…RLIDTTQINA (124 aa)). Residues 57-110 (AKGASLDDLIDSCIQSFDADGNLCRSNQLLQVMLTMHRIVISSAELLQKVITLY) form a ras exchanger motif region; required for transforming activity region. Position 184 is a phosphothreonine; by PKC (threonine 184). A Ras-GEF domain is found at 205 to 436 (EPEELSEHLT…YELSYAREPR (232 aa)). 2 consecutive EF-hand domains span residues 470–505 (HVQR…FPFS) and 506–532 (FCVM…ASSI). Ca(2+)-binding residues include aspartate 483, aspartate 485, aspartate 487, tyrosine 489, and glutamate 494. The segment at 541-591 (PHNFQETTYLKPTFCDNCAGFLWGVIKQGYRCKDCGMNCHKQCKDLVVFEC) adopts a Phorbol-ester/DAG-type zinc-finger fold. A disordered region spans residues 673-694 (TQTESQPWIGSEGPSGPFVLSS). The segment at 686–694 (PSGPFVLSS) is suppress the PT region-mediated translocation to plasma membrane. The segment at 718 to 797 (LVRKRAFVKW…LAQMEQGDCS (80 aa)) is PT region; mediates the BCR-dependent translocation to plasma membrane. Residues 746–786 (PTYQELEQEINTLKADNDALKIQLKYAQKKIESLQLEKSNH) are a coiled coil.

It belongs to the RASGRP family. As to quaternary structure, homodimer. Forms a signaling complex with DGKZ and HRAS. Interacts with F-actin. Interacts with SKAP1. Expressed in brain with higher expression in cerebellum, cerebral cortex and amygdala. Expressed in the hematopoietic system. Expressed in T-cells (at protein level). Expressed in NK cells (at protein level).

The protein resides in the cytoplasm. It localises to the cytosol. Its subcellular location is the cell membrane. The protein localises to the golgi apparatus membrane. It is found in the endoplasmic reticulum membrane. With respect to regulation, autoinhibited. Activated by diacylglycerol and calcium binding, which induces a conformational change releasing the autoinhibitory state. Regulated by DGKA. Regulated by DGKZ. Regulated by PLC gamma and F-actin polymerization. In terms of biological role, functions as a calcium- and diacylglycerol (DAG)-regulated nucleotide exchange factor specifically activating Ras through the exchange of bound GDP for GTP. Activates the Erk/MAP kinase cascade. Regulates T-cell/B-cell development, homeostasis and differentiation by coupling T-lymphocyte/B-lymphocyte antigen receptors to Ras. Regulates NK cell cytotoxicity and ITAM-dependent cytokine production by activation of Ras-mediated ERK and JNK pathways. Functions in mast cell degranulation and cytokine secretion, regulating FcERI-evoked allergic responses. May also function in differentiation of other cell types. In Homo sapiens (Human), this protein is RAS guanyl-releasing protein 1 (RASGRP1).